Here is a 491-residue protein sequence, read N- to C-terminus: Probable Xaa-Pro aminopeptidase AFLA_084750 (491 aa).

Residues aspartate 271, aspartate 282, glutamate 419, and glutamate 458 each coordinate Mn(2+).

It belongs to the peptidase M24B family. Mn(2+) serves as cofactor.

The enzyme catalyses Release of any N-terminal amino acid, including proline, that is linked to proline, even from a dipeptide or tripeptide.. Catalyzes the removal of a penultimate prolyl residue from the N-termini of peptides. In Aspergillus flavus (strain ATCC 200026 / FGSC A1120 / IAM 13836 / NRRL 3357 / JCM 12722 / SRRC 167), this protein is Probable Xaa-Pro aminopeptidase AFLA_084750.